The following is a 505-amino-acid chain: Glycerol kinase (505 aa).

Position 14 (Thr14) interacts with ADP. Residues Thr14, Thr15, and Ser16 each contribute to the ATP site. Thr14 contacts sn-glycerol 3-phosphate. Arg18 lines the ADP pocket. The sn-glycerol 3-phosphate site is built by Arg84, Glu85, Tyr136, and Asp246. Glycerol contacts are provided by Arg84, Glu85, Tyr136, Asp246, and Gln247. Residues Thr268 and Gly311 each contribute to the ADP site. The ATP site is built by Thr268, Gly311, Gln315, and Gly412. ADP-binding residues include Gly412 and Asn416.

Belongs to the FGGY kinase family.

It carries out the reaction glycerol + ATP = sn-glycerol 3-phosphate + ADP + H(+). The protein operates within polyol metabolism; glycerol degradation via glycerol kinase pathway; sn-glycerol 3-phosphate from glycerol: step 1/1. With respect to regulation, inhibited by fructose 1,6-bisphosphate (FBP). In terms of biological role, key enzyme in the regulation of glycerol uptake and metabolism. Catalyzes the phosphorylation of glycerol to yield sn-glycerol 3-phosphate. This Vibrio parahaemolyticus serotype O3:K6 (strain RIMD 2210633) protein is Glycerol kinase.